The sequence spans 65 residues: Defensin Cg-Defm (65 aa).

An N-terminal signal peptide occupies residues 1 to 22 (MKVFVLLTLAVLLMVSADMAFA). The beta-D-GlcNAc-(1-&gt;4)-Mur2Ac(oyl-L-Ala-gamma-D-Glu-L-Lys-D-Ala-D-Ala)-di-trans,octa-cis-undecaprenyl diphosphate site is built by Phe24, Gly25, and Cys26. Disulfide bonds link Cys26–Cys47, Cys33–Cys56, Cys37–Cys58, and Cys42–Cys61. A binds to membrane interface region spans residues 27–30 (PGNQ). His36 lines the beta-D-GlcNAc-(1-&gt;4)-Mur2Ac(oyl-L-Ala-gamma-D-Glu-L-Lys-D-Ala-D-Ala)-di-trans,octa-cis-undecaprenyl diphosphate pocket. A binds to membrane interface region spans residues 48 to 54 (DAATLWL). Residue Cys56 coordinates beta-D-GlcNAc-(1-&gt;4)-Mur2Ac(oyl-L-Ala-gamma-D-Glu-L-Lys-D-Ala-D-Ala)-di-trans,octa-cis-undecaprenyl diphosphate.

The protein belongs to the invertebrate defensin family. As to expression, expressed in the mantle. Low or no expression in most of the organs analyzed, including hemocytes, heart, digestive gland, and gills.

It is found in the secreted. The protein localises to the target cell membrane. Its function is as follows. Antibacterial peptide mostly active against Gram-positive bacteria (M.lysodeikticus, S.aureus, and the marine bacteria, B.stationis, and M.maritypicum). It acts by selectively inhibiting peptidoglycan biosynthesis through complex formation with the cell wall precursor lipid II (1:1 molar ratio) thus inhibiting cell wall synthesis. It does not disrupt cell membranes. Is noticeably more potent than Cg-Defh1. It shows no or limited activities against Gram-negative bacteria and filamentous fungi. This chain is Defensin Cg-Defm, found in Magallana gigas (Pacific oyster).